We begin with the raw amino-acid sequence, 102 residues long: Small ribosomal subunit protein eS24 (102 aa).

Residues 70–102 (VYDSPAQAAEVEHDHMLERNKIGADDADAEEAE) are disordered. Basic and acidic residues predominate over residues 79-93 (EVEHDHMLERNKIGA).

Belongs to the eukaryotic ribosomal protein eS24 family.

The chain is Small ribosomal subunit protein eS24 from Halobacterium salinarum (strain ATCC 29341 / DSM 671 / R1).